Here is a 146-residue protein sequence, read N- to C-terminus: Large ribosomal subunit protein uL15 (146 aa).

The segment covering 1–13 (MKLHELQPAEGSR) has biased composition (basic and acidic residues). The disordered stretch occupies residues 1–58 (MKLHELQPAEGSRKVRNRVGRGIGSGNGKTAGKGHKGQKARSGGGVRPGFEGGQNPLY). Gly residues-rich tracts occupy residues 21–31 (RGIGSGNGKTA) and 42–52 (SGGGVRPGFEG).

Belongs to the universal ribosomal protein uL15 family. As to quaternary structure, part of the 50S ribosomal subunit.

Binds to the 23S rRNA. In Shouchella clausii (strain KSM-K16) (Alkalihalobacillus clausii), this protein is Large ribosomal subunit protein uL15.